The sequence spans 273 residues: Multivesicular body subunit 12A (273 aa).

One can recognise an MABP domain in the interval Gly9–Lys151. The residue at position 130 (Thr130) is a Phosphothreonine. Residues Arg154–Thr186 form a disordered region. The short motif at Pro155–Arg160 is the SH3-binding element. Residues Ser163, Ser170, Ser195, and Ser202 each carry the phosphoserine modification. The segment at Ser192–Ser273 is interaction with TSG101, VPS37B and VPS28. The residue at position 204 (Tyr204) is a Phosphotyrosine. Ser207 is subject to Phosphoserine. The UMA domain occupies Met215–Ala265.

It belongs to the MVB12 family. In terms of assembly, component of the ESCRT-I complex (endosomal sorting complex required for transport I) which consists of TSG101, VPS28, a VPS37 protein (VPS37A to -D) and MVB12A or MVB12B in a 1:1:1:1 stoichiometry. Interacts with CD2AP and CIN85/SH3KBP1. Interacts with CD2AP (via one of the SH3 domains). Interacts with TSG101; the association appears to be mediated by the TSG101-VPS37 binary subcomplex. Interacts with VPS28. Interacts with VPS37B; the association appears to be mediated by the TSG101-VPS37 binary subcomplex. Interacts with VPS37C; the association appears to be mediated by the TSG101-VPS37 binary subcomplex. Interacts with VPS37D; the association appears to be mediated by the TSG101-VPS37 binary subcomplex. Interacts with CEP55. In terms of processing, phosphorylated on Tyr-204 upon EGF stimulation. Phosphorylation is required for interaction with CD2AP and CIN85/SH3KBP1.

The protein localises to the cytoplasm. The protein resides in the cytoskeleton. It localises to the nucleus. Its subcellular location is the endosome. It is found in the microtubule organizing center. The protein localises to the centrosome. The protein resides in the late endosome membrane. Functionally, component of the ESCRT-I complex, a regulator of vesicular trafficking process. Required for the sorting of endocytic ubiquitinated cargos into multivesicular bodies. May be involved in the ligand-mediated internalization and down-regulation of EGF receptor. The sequence is that of Multivesicular body subunit 12A (MVB12A) from Bos taurus (Bovine).